Consider the following 118-residue polypeptide: Thioredoxin H-type 2 (118 aa).

The Thioredoxin domain maps to 2–113 (AEEGQVIGVH…LQQTIAKHIS (112 aa)). Active-site nucleophile residues include cysteine 39 and cysteine 42. An intrachain disulfide couples cysteine 39 to cysteine 42.

It belongs to the thioredoxin family. Plant H-type subfamily.

The protein localises to the cytoplasm. Its function is as follows. Participates in various redox reactions through the reversible oxidation of the active center dithiol to a disulfide. The H form is known to activate a number of cytosolic enzymes. The protein is Thioredoxin H-type 2 of Nicotiana tabacum (Common tobacco).